The primary structure comprises 224 residues: Charged multivesicular body protein 3 (224 aa).

Gly-2 carries the N-myristoyl glycine lipid modification. Positions 2-113 are intramolecular interaction with C-terminus; that stretch reads GLFGKTQEKP…LQKSTEVMKA (112 aa). Residues 22–54 adopt a coiled-coil conformation; sequence KIRKEMRVVDRQIRDIQREEEKVKRSVKDAAKK. Important for autoinhibitory function stretches follow at residues 59–64 and 168–169; these read VCVVLA and IL. A coiled-coil region spans residues 149 to 224; the sequence is ESMDDQEEME…MQSRLATLRS (76 aa). Positions 151-222 are intramolecular interaction with N-terminus; sequence MDDQEEMEEA…EAMQSRLATL (72 aa). The interval 151 to 224 is interaction with VPS4A; the sequence is MDDQEEMEEA…MQSRLATLRS (74 aa). Lys-179 is covalently cross-linked (Glycyl lysine isopeptide (Lys-Gly) (interchain with G-Cter in ubiquitin)). Positions 180–224 are disordered; it reads APSKVTDALPEPEPAGAMAASEEGEEEEDEEDLEAMQSRLATLRS. 3 interaction with STAMBP regions span residues 196–224, 205–209, and 223–224; these read AMAASEEGEEEEDEEDLEAMQSRLATLRS, EEEDE, and RS. Ser-200 carries the phosphoserine modification. The MIT-interacting motif signature appears at 201-213; the sequence is EEGEEEEDEEDLE. The span at 201 to 213 shows a compositional bias: acidic residues; sequence EEGEEEEDEEDLE.

It belongs to the SNF7 family. Probable core component of the endosomal sorting required for transport complex III (ESCRT-III). ESCRT-III components are thought to multimerize to form a flat lattice on the perimeter membrane of the endosome. Several assembly forms of ESCRT-III may exist that interact and act sequentially. Forms a metastable monomer in solution; its core structure (without part of the putative autoinhibitory C-terminal acidic region) oligomerizes into a flat lattice via two different dimerization interfaces. In vitro, heteromerizes with CHMP2A (but not CHMP4) to form helical tubular structures that expose membrane-interacting sites on the outside whereas VPS4B can associate on the inside of the tubule. May interact with IGFBP7; the relevance of such interaction however remains unclear. Interacts with CHMP2A. Interacts with CHMP4A; the interaction requires the release of CHMP4A autoinhibition. Interacts with VPS4A. Interacts with STAMBP; the interaction appears to relieve the autoinhibition of CHMP3. Interacts with VTA1. Expressed in lung, testis, heart, spleen, skeletal muscle, kidney, liver and brain.

It is found in the cytoplasm. The protein resides in the cytosol. It localises to the membrane. The protein localises to the endosome. Its subcellular location is the late endosome membrane. In terms of biological role, probable core component of the endosomal sorting required for transport complex III (ESCRT-III) which is involved in multivesicular bodies (MVBs) formation and sorting of endosomal cargo proteins into MVBs. MVBs contain intraluminal vesicles (ILVs) that are generated by invagination and scission from the limiting membrane of the endosome and mostly are delivered to lysosomes enabling degradation of membrane proteins, such as stimulated growth factor receptors, lysosomal enzymes and lipids. The MVB pathway appears to require the sequential function of ESCRT-O, -I,-II and -III complexes. ESCRT-III proteins mostly dissociate from the invaginating membrane before the ILV is released. The ESCRT machinery also functions in topologically equivalent membrane fission events, such as the terminal stages of cytokinesis. ESCRT-III proteins are believed to mediate the necessary vesicle extrusion and/or membrane fission activities, possibly in conjunction with the AAA ATPase VPS4. Selectively binds to phosphatidylinositol 3,5-bisphosphate PtdIns(3,5)P2 and PtdIns(3,4)P2 in preference to other phosphoinositides tested. Involved in late stages of cytokinesis. Plays a role in endosomal sorting/trafficking of EGF receptor. This is Charged multivesicular body protein 3 (Chmp3) from Mus musculus (Mouse).